We begin with the raw amino-acid sequence, 414 residues long: Serine--tRNA ligase (414 aa).

230–232 (TAE) contributes to the L-serine binding site. 261–263 (RKE) is a binding site for ATP. An L-serine-binding site is contributed by Glu-284. 348–351 (EISS) contacts ATP. Ser-382 contacts L-serine.

This sequence belongs to the class-II aminoacyl-tRNA synthetase family. Type-1 seryl-tRNA synthetase subfamily. As to quaternary structure, homodimer. The tRNA molecule binds across the dimer.

Its subcellular location is the cytoplasm. The catalysed reaction is tRNA(Ser) + L-serine + ATP = L-seryl-tRNA(Ser) + AMP + diphosphate + H(+). It carries out the reaction tRNA(Sec) + L-serine + ATP = L-seryl-tRNA(Sec) + AMP + diphosphate + H(+). The protein operates within aminoacyl-tRNA biosynthesis; selenocysteinyl-tRNA(Sec) biosynthesis; L-seryl-tRNA(Sec) from L-serine and tRNA(Sec): step 1/1. Its function is as follows. Catalyzes the attachment of serine to tRNA(Ser). Is also able to aminoacylate tRNA(Sec) with serine, to form the misacylated tRNA L-seryl-tRNA(Sec), which will be further converted into selenocysteinyl-tRNA(Sec). The protein is Serine--tRNA ligase of Sulfurovum sp. (strain NBC37-1).